A 107-amino-acid polypeptide reads, in one-letter code: Ig kappa chain V region 4135 (107 aa).

The framework-1 stretch occupies residues 1-24 (ADIVMTQTPASVSEPVGGTVTIKC). A complementarity-determining-1 region spans residues 25-35 (QTSQSIDDYLS). The tract at residues 36-50 (WYQQKPGQPPKGLIY) is framework-2. Residues 51–57 (RASTLAS) are complementarity-determining-2. The segment at 58–89 (GVPSRFRGSGSGTDFTLTISDLECADAATYYC) is framework-3. A complementarity-determining-3 region spans residues 90 to 96 (QSTYGVG). Positions 97–106 (FGGGTEVVVK) are framework-4.

In Oryctolagus cuniculus (Rabbit), this protein is Ig kappa chain V region 4135.